The primary structure comprises 547 residues: Signal recognition particle receptor subunit alpha homolog (547 aa).

The segment at 124–174 (LENETDTKSLPVEANNDNSARKKNEYEMKKKGAQSKQTNAPKKGKKQLRKW) is disordered. Positions 142-153 (SARKKNEYEMKK) are enriched in basic and acidic residues. An NG domain region spans residues 343-546 (YTISLIGVNG…SVDWVVDQLM (204 aa)). GTP-binding positions include 349–356 (GVNGVGKS), 437–441 (DTAGR), and 498–501 (SKVD).

This sequence belongs to the GTP-binding SRP family. Heterodimer of an alpha and a beta chain.

Its subcellular location is the endoplasmic reticulum membrane. Functionally, component of the SRP (signal recognition particle) receptor (SR). Ensures, in conjunction with the signal recognition particle, the correct targeting of the nascent secretory proteins to the endoplasmic reticulum membrane system. GTP hydrolysis may enhance the fidelity of and provide unidirectionality to the targeting reaction. In Schizosaccharomyces pombe (strain 972 / ATCC 24843) (Fission yeast), this protein is Signal recognition particle receptor subunit alpha homolog (srp101).